The following is a 129-amino-acid chain: UPF0102 protein Cpar_0015 (129 aa).

This sequence belongs to the UPF0102 family.

The sequence is that of UPF0102 protein Cpar_0015 from Chlorobaculum parvum (strain DSM 263 / NCIMB 8327) (Chlorobium vibrioforme subsp. thiosulfatophilum).